Consider the following 89-residue polypeptide: Small ribosomal subunit protein bS16 (89 aa).

The protein belongs to the bacterial ribosomal protein bS16 family.

The protein is Small ribosomal subunit protein bS16 of Anaplasma marginale (strain Florida).